The following is a 417-amino-acid chain: Gamma-glutamyl phosphate reductase (417 aa).

Belongs to the gamma-glutamyl phosphate reductase family.

Its subcellular location is the cytoplasm. It carries out the reaction L-glutamate 5-semialdehyde + phosphate + NADP(+) = L-glutamyl 5-phosphate + NADPH + H(+). The protein operates within amino-acid biosynthesis; L-proline biosynthesis; L-glutamate 5-semialdehyde from L-glutamate: step 2/2. Functionally, catalyzes the NADPH-dependent reduction of L-glutamate 5-phosphate into L-glutamate 5-semialdehyde and phosphate. The product spontaneously undergoes cyclization to form 1-pyrroline-5-carboxylate. This Legionella pneumophila (strain Corby) protein is Gamma-glutamyl phosphate reductase.